The following is a 356-amino-acid chain: Cell division control protein 10 (356 aa).

The Septin-type G domain occupies 36–286 (KGFELNVLVV…NNYRKKIFEI (251 aa)). The G1 motif stretch occupies residues 46 to 53 (GRRGLGTS). GTP contacts are provided by residues 46 to 53 (GRRGLGTS) and Thr70. The interval 93 to 96 (TYHE) is G3 motif. Residues 163–166 (PKAD) form a G4 motif region. GTP is bound by residues 164–172 (KADMYTPDE) and Arg235.

The protein belongs to the TRAFAC class TrmE-Era-EngA-EngB-Septin-like GTPase superfamily. Septin GTPase family. Component of the septin complex.

Functionally, septins are GTPases involved in cytokinesis. The septins localize to the site of cleavage and act as a structural scaffold that recruits different components involved in diverse processes at specific stages during the cell cycle. Septins are also involved in cell morphogenesis, chitin deposition, cell cycle regulation, cell compartmentalization and spore wall formation. This Encephalitozoon cuniculi (strain GB-M1) (Microsporidian parasite) protein is Cell division control protein 10 (CDC10).